The chain runs to 195 residues: HTH-type transcriptional regulator BetI (195 aa).

Residues 8 to 68 (EIRRAQLIDA…ATMRHVLRDL (61 aa)) form the HTH tetR-type domain. A DNA-binding region (H-T-H motif) is located at residues 31-50 (TLASVAQRASISTGIVSHYF).

It participates in amine and polyamine biosynthesis; betaine biosynthesis via choline pathway [regulation]. Repressor involved in the biosynthesis of the osmoprotectant glycine betaine. It represses transcription of the choline transporter BetT and the genes of BetAB involved in the synthesis of glycine betaine. The protein is HTH-type transcriptional regulator BetI of Paraburkholderia phytofirmans (strain DSM 17436 / LMG 22146 / PsJN) (Burkholderia phytofirmans).